A 424-amino-acid polypeptide reads, in one-letter code: Tyrosine--tRNA ligase (424 aa).

Y37 contributes to the L-tyrosine binding site. Positions 42–51 (PTADSLHLGH) match the 'HIGH' region motif. L-tyrosine-binding residues include Y175 and Q179. Positions 235–239 (KFGKT) match the 'KMSKS' region motif. K238 contacts ATP. The S4 RNA-binding domain occupies 357-414 (AELQKALVSAQLAPSRSQARTLIQSSSISVNGKKQLKPEYIFTSEDRLLDRYTLLRRG).

This sequence belongs to the class-I aminoacyl-tRNA synthetase family. TyrS type 1 subfamily. Homodimer.

The protein localises to the cytoplasm. The catalysed reaction is tRNA(Tyr) + L-tyrosine + ATP = L-tyrosyl-tRNA(Tyr) + AMP + diphosphate + H(+). Catalyzes the attachment of tyrosine to tRNA(Tyr) in a two-step reaction: tyrosine is first activated by ATP to form Tyr-AMP and then transferred to the acceptor end of tRNA(Tyr). This Hamiltonella defensa subsp. Acyrthosiphon pisum (strain 5AT) protein is Tyrosine--tRNA ligase.